We begin with the raw amino-acid sequence, 83 residues long: Hainantoxin-III 12 (83 aa).

An N-terminal signal peptide occupies residues 1–21 (MKASMFLALAGLVLLFVVGYA). Residues 22 to 48 (SGSEEKEFPRELLSKIFAVDDFKGEER) constitute a propeptide that is removed on maturation. Intrachain disulfides connect C50/C65, C57/C70, and C64/C77. At L81 the chain carries Leucine amide.

This sequence belongs to the neurotoxin 10 (Hwtx-1) family. 15 (Hntx-3) subfamily. As to quaternary structure, monomer. In terms of tissue distribution, expressed by the venom gland.

It localises to the secreted. Its function is as follows. Selective antagonist of neuronal tetrodotoxin (TTX)-sensitive voltage-gated sodium channels (IC(50)=1270 nM on Nav1.1/SCN1A, 270 nM on Nav1.2/SCN2A, 491 nM on Nav1.3/SCN3A and 232 nM on Nav1.7/SCN9A). This toxin suppress Nav1.7 current amplitude without significantly altering the activation, inactivation, and repriming kinetics. Short extreme depolarizations partially activate the toxin-bound channel, indicating voltage-dependent inhibition of this toxin. This toxin increases the deactivation of the Nav1.7 current after extreme depolarizations. The toxin-Nav1.7 complex is gradually dissociated upon prolonged strong depolarizations in a voltage-dependent manner, and the unbound toxin rebinds to Nav1.7 after a long repolarization. Moreover, analysis of chimeric channels showed that the DIIS3-S4 linker is critical for toxin binding to Nav1.7. These data are consistent with this toxin interacting with Nav1.7 site 4 and trapping the domain II voltage sensor in the closed state. The polypeptide is Hainantoxin-III 12 (Cyriopagopus hainanus (Chinese bird spider)).